Consider the following 362-residue polypeptide: GDSL esterase/lipase 6 (362 aa).

The first 23 residues, 1–23, serve as a signal peptide directing secretion; the sequence is MSSSSSMDLLMCLLLLISPVVLA. The Nucleophile role is filled by Ser38. Residues Asn50, Asn103, Asn107, Asn195, and Asn296 are each glycosylated (N-linked (GlcNAc...) asparagine). Active-site residues include Asp323 and His326.

This sequence belongs to the 'GDSL' lipolytic enzyme family.

It is found in the secreted. This chain is GDSL esterase/lipase 6 (GLIP6), found in Arabidopsis thaliana (Mouse-ear cress).